Here is a 209-residue protein sequence, read N- to C-terminus: Na(+)-translocating NADH-quinone reductase subunit D (209 aa).

5 consecutive transmembrane segments (helical) span residues 42-62 (VVMT…ISLI), 66-86 (IPNS…VIVV), 95-115 (FEIS…CIVM), 131-151 (FMDG…VGFL), and 178-198 (NGLF…IWAL).

It belongs to the NqrDE/RnfAE family. As to quaternary structure, composed of six subunits; NqrA, NqrB, NqrC, NqrD, NqrE and NqrF.

The protein resides in the cell inner membrane. It catalyses the reaction a ubiquinone + n Na(+)(in) + NADH + H(+) = a ubiquinol + n Na(+)(out) + NAD(+). NQR complex catalyzes the reduction of ubiquinone-1 to ubiquinol by two successive reactions, coupled with the transport of Na(+) ions from the cytoplasm to the periplasm. NqrA to NqrE are probably involved in the second step, the conversion of ubisemiquinone to ubiquinol. In Serratia proteamaculans (strain 568), this protein is Na(+)-translocating NADH-quinone reductase subunit D.